Here is a 94-residue protein sequence, read N- to C-terminus: Large ribosomal subunit protein uL23 (94 aa).

This sequence belongs to the universal ribosomal protein uL23 family. Part of the 50S ribosomal subunit. Contacts protein L29, and trigger factor when it is bound to the ribosome.

In terms of biological role, one of the early assembly proteins it binds 23S rRNA. One of the proteins that surrounds the polypeptide exit tunnel on the outside of the ribosome. Forms the main docking site for trigger factor binding to the ribosome. The chain is Large ribosomal subunit protein uL23 from Phytoplasma australiense.